Here is a 218-residue protein sequence, read N- to C-terminus: Ribose-5-phosphate isomerase A (218 aa).

Substrate contacts are provided by residues 28–31 (TGST), 81–84 (DGAD), and 94–97 (KGGG). The active-site Proton acceptor is Glu-103. Substrate is bound at residue Lys-121.

Belongs to the ribose 5-phosphate isomerase family. Homodimer.

The enzyme catalyses aldehydo-D-ribose 5-phosphate = D-ribulose 5-phosphate. Its pathway is carbohydrate degradation; pentose phosphate pathway; D-ribose 5-phosphate from D-ribulose 5-phosphate (non-oxidative stage): step 1/1. Catalyzes the reversible conversion of ribose-5-phosphate to ribulose 5-phosphate. This is Ribose-5-phosphate isomerase A from Vibrio vulnificus (strain CMCP6).